Consider the following 767-residue polypeptide: Protein hunchback (767 aa).

Disordered regions lie at residues 30-51 (EPGH…PIPS), 105-127 (QQQY…HLMG), and 174-212 (EKLQ…SNSS). Positions 39-51 (SVASSPRQSPIPS) are enriched in polar residues. Residues 105–117 (QQQYQQHFQAAQQ) show a composition bias toward low complexity. Basic and acidic residues predominate over residues 200 to 212 (EPEKEHDQMSNSS). 4 C2H2-type zinc fingers span residues 242–264 (YKCK…TRTH), 271–293 (LQCP…IRKH), 299–321 (FQCD…RKSH), and 327–351 (YRCA…KYGH). Disordered regions lie at residues 357 to 424 (LDED…TSQL), 518 to 570 (QLQQ…QPQQ), and 610 to 704 (GVMT…APPS). A compositionally biased stretch (gly residues) spans 386 to 397 (IASGGSGSGSGS). Positions 518-527 (QLQQQNQQQS) are enriched in low complexity. The segment covering 528–537 (DNEEEEQDDE) has biased composition (acidic residues). Residues 661-704 (ANTSASSTASSSGNSSNASSNSNGNSSSNSSSSGTNSAAAAPPS) are compositionally biased toward low complexity. C2H2-type zinc fingers lie at residues 714–736 (YECK…MGYH) and 742–766 (FKCN…RNAH).

Belongs to the hunchback C2H2-type zinc-finger protein family.

It localises to the nucleus. Functionally, gap class segmentation protein that controls development of head structures. The polypeptide is Protein hunchback (hb) (Drosophila orena (Fruit fly)).